Reading from the N-terminus, the 557-residue chain is NADP-dependent malic enzyme (557 aa).

The active-site Proton donor is the tyrosine 91. NADP(+) is bound at residue arginine 144. Lysine 162 (proton acceptor) is an active-site residue. Glutamate 234, aspartate 235, and aspartate 258 together coordinate a divalent metal cation. NADP(+) contacts are provided by residues aspartate 258, 290-307 (GAGE…MAME), and asparagine 397.

Belongs to the malic enzymes family. In terms of assembly, homotetramer. It depends on Mg(2+) as a cofactor. Mn(2+) is required as a cofactor.

It is found in the cytoplasm. It carries out the reaction (S)-malate + NADP(+) = pyruvate + CO2 + NADPH. The enzyme catalyses oxaloacetate + H(+) = pyruvate + CO2. The chain is NADP-dependent malic enzyme (ME1) from Anas platyrhynchos (Mallard).